The chain runs to 32 residues: Conotoxin sr7a (32 aa).

Cystine bridges form between Cys1–Cys17, Cys8–Cys21, and Cys16–Cys31. Ser32 is subject to Serine amide.

In terms of tissue distribution, expressed by the venom duct.

It localises to the secreted. Functionally, elicits hyperactivity when injected intracranially into mice and produces paralysis when injected into the pedal muscle of freshwater snails, Pomacea paludosa, but it has no apparent effect after intramuscular injection into the limpet Patella opea or the freshwater fish Lebistes reticulatus. This is Conotoxin sr7a from Conus spurius (Alphabet cone).